Reading from the N-terminus, the 400-residue chain is MTTIGTPLSPRATKVMLLGSGELGREVLIALQRLGVETIAVDRYENAPGHQVAHHARTIAMSDPDQLRALIEAERPDLVVPEIEAIATPVLEALEAEGVTTVIPTARATRLTMDREGIRRLAAETLGVPTSPYRFCDSLAELQAAIDDEIGYPCVVKPVMSSSGKGQSKINGPDEVAAAWEYAMAGGRVSHTRIIVEGFVDFDYEITLLTVRARGADGEIATQFCEPIGHRQVGGDYVESWQPHPMPATALERAQEIAGAVTGNLGGQGIFGVELFVKGDQVWFSEVSPRPHDTGMVTMVTQWQNEFELHARAILGLPVDTTLRAPGASAVIYGGVDATGVVFDGVDAALQVPHTDIRLFGKPESFVKRRMGVALAFDDDVQTARRNAAEAASRMKPRAV.

Residues 22-23 (EL) and Glu82 each bind N(1)-(5-phospho-beta-D-ribosyl)glycinamide. ATP is bound by residues Arg115, Lys157, 162–167 (SSGKGQ), 197–200 (EGFV), and Glu205. The region spanning 120–315 (RLAAETLGVP…EFELHARAIL (196 aa)) is the ATP-grasp domain. Positions 274 and 286 each coordinate Mg(2+). Residues Asp293, Lys362, and 369–370 (RR) contribute to the N(1)-(5-phospho-beta-D-ribosyl)glycinamide site.

This sequence belongs to the PurK/PurT family. As to quaternary structure, homodimer.

The catalysed reaction is N(1)-(5-phospho-beta-D-ribosyl)glycinamide + formate + ATP = N(2)-formyl-N(1)-(5-phospho-beta-D-ribosyl)glycinamide + ADP + phosphate + H(+). It functions in the pathway purine metabolism; IMP biosynthesis via de novo pathway; N(2)-formyl-N(1)-(5-phospho-D-ribosyl)glycinamide from N(1)-(5-phospho-D-ribosyl)glycinamide (formate route): step 1/1. Its function is as follows. Involved in the de novo purine biosynthesis. Catalyzes the transfer of formate to 5-phospho-ribosyl-glycinamide (GAR), producing 5-phospho-ribosyl-N-formylglycinamide (FGAR). Formate is provided by PurU via hydrolysis of 10-formyl-tetrahydrofolate. This is Formate-dependent phosphoribosylglycinamide formyltransferase from Mycolicibacterium smegmatis (strain ATCC 700084 / mc(2)155) (Mycobacterium smegmatis).